A 1952-amino-acid polypeptide reads, in one-letter code: Protein ROS1A (1952 aa).

4 disordered regions span residues 72–157 (EVVG…CRSE), 693–778 (IIRP…ESTS), 1302–1334 (HGTS…DDNV), and 1367–1398 (LIEN…AGKK). Basic residues-rich tracts occupy residues 90–102 (PARK…HRPK) and 130–139 (GKRKYVRKKT). Basic and acidic residues-rich tracts occupy residues 709–720 (PRTDNHQVKVSE) and 727–747 (LPEK…EKPK). The segment covering 769–778 (TNPLQNESTS) has biased composition (polar residues). Residues 1388–1398 (AKRPRVGAGKK) show a composition bias toward basic residues. 4 residues coordinate [4Fe-4S] cluster: cysteine 1582, cysteine 1589, cysteine 1592, and cysteine 1598.

It belongs to the DNA glycosylase family. DEMETER subfamily. It depends on [4Fe-4S] cluster as a cofactor. In terms of tissue distribution, expressed in roots, leaf blades, leaf sheaths, apical and lateral shoot meristems, inflorescence meristems, lodicules, pollen grains, ovules and seeds. Expressed in vascular tissues of roots and leaves, pollen grains, pericarp, aleurone, and starchy endosperm.

The protein resides in the nucleus. Its function is as follows. Bifunctional DNA glycosylase/lyase, which excises 5-methylcytosine (5-meC) and 5-hydroxymethylcytosine (5-hmeC), leaving an apyrimidinic (AP) site that is subsequently incised by the lyase activity. DNA demethylase that is indispensable in both male and female gametophyte development. Involved in the regulation of DNA methylation in the promoters of RISBZ1/BZIP58 and DOF3/RPBF, two transcription factors that functions synergistically to positively regulate genes that are key players in the development of aleurone layers. Active DNA demethylation carried out by ROS1A in rice endosperms may restrict the number of aleurone cell layers. The sequence is that of Protein ROS1A from Oryza sativa subsp. japonica (Rice).